Reading from the N-terminus, the 420-residue chain is Transcriptional adapter 2-beta (420 aa).

Residues 4–59 (LGKKYCVYCLAEVSPLRFRCTECQDIELCPECFSAGAEIGHHRRYHGYQLVDGGRF) form a ZZ-type zinc finger. 8 residues coordinate Zn(2+): C9, C12, C23, C26, C32, C35, H45, and H49. One can recognise an SANT domain in the interval 65–118 (EAEGGWTSREEQLLLDAIEQFGFGNWEDMAAHVGASRTPQEVMEHYVSMYIHGN). The segment at 305–335 (SAEYEAARHKREKRKENKNLAGSKRGKEDGK) is disordered.

Interacts with GCN5L2, SMARCA4, SMARCE1 and PAX5. Component of the TFTC-HAT complex.

It localises to the nucleus. In terms of biological role, coactivates PAX5-dependent transcription together with either SMARCA4 or GCN5L2. In Homo sapiens (Human), this protein is Transcriptional adapter 2-beta (TADA2B).